The following is a 465-amino-acid chain: GTPase Der (465 aa).

EngA-type G domains lie at 3–167 (PLVA…PEEG) and 179–352 (VRIA…ASAT). Residues 9-16 (GRPNVGKS), 57-61 (DTGGI), 119-122 (NKID), 185-192 (GRPNVGKS), 232-236 (DTAGL), and 297-300 (NKWD) contribute to the GTP site. Residues 353–437 (HEFSTSEVNQ…PVCFIFREGA (85 aa)) enclose the KH-like domain.

This sequence belongs to the TRAFAC class TrmE-Era-EngA-EngB-Septin-like GTPase superfamily. EngA (Der) GTPase family. As to quaternary structure, associates with the 50S ribosomal subunit.

Its function is as follows. GTPase that plays an essential role in the late steps of ribosome biogenesis. The protein is GTPase Der of Xanthomonas oryzae pv. oryzae (strain MAFF 311018).